A 190-amino-acid chain; its full sequence is ATP synthase subunit delta (190 aa).

This sequence belongs to the ATPase delta chain family. In terms of assembly, F-type ATPases have 2 components, F(1) - the catalytic core - and F(0) - the membrane proton channel. F(1) has five subunits: alpha(3), beta(3), gamma(1), delta(1), epsilon(1). F(0) has three main subunits: a(1), b(2) and c(10-14). The alpha and beta chains form an alternating ring which encloses part of the gamma chain. F(1) is attached to F(0) by a central stalk formed by the gamma and epsilon chains, while a peripheral stalk is formed by the delta and b chains.

It localises to the cell inner membrane. In terms of biological role, f(1)F(0) ATP synthase produces ATP from ADP in the presence of a proton or sodium gradient. F-type ATPases consist of two structural domains, F(1) containing the extramembraneous catalytic core and F(0) containing the membrane proton channel, linked together by a central stalk and a peripheral stalk. During catalysis, ATP synthesis in the catalytic domain of F(1) is coupled via a rotary mechanism of the central stalk subunits to proton translocation. Functionally, this protein is part of the stalk that links CF(0) to CF(1). It either transmits conformational changes from CF(0) to CF(1) or is implicated in proton conduction. The chain is ATP synthase subunit delta from Petrotoga mobilis (strain DSM 10674 / SJ95).